Reading from the N-terminus, the 79-residue chain is Large ribosomal subunit protein uL30 (79 aa).

This sequence belongs to the universal ribosomal protein uL30 family. As to quaternary structure, part of the 50S ribosomal subunit.

The chain is Large ribosomal subunit protein uL30 from Anaeromyxobacter sp. (strain Fw109-5).